The primary structure comprises 71 residues: Natterin-P (71 aa).

A signal peptide spans 1-18 (MKLLVLLVTLLVLSWTSA). Positions 19 to 45 (EDLGDQEILENNEDNNHESELGEPAAQ) are excised as a propeptide. Residues 22–31 (GDQEILENNE) are compositionally biased toward acidic residues. Positions 22 to 54 (GDQEILENNEDNNHESELGEPAAQHTDDETSQL) are disordered. Cys62 and Cys71 form a disulfide bridge.

The protein belongs to the natterin family. Expressed by the venom gland.

The protein localises to the secreted. Inhibited by tissue-kallikrein inhibitor TKI and trasylol. Plasma kallikrein inhibitor PKSI527 and classical inhibitors of serine-, metallo-, thiol- or aspartate-peptidases evokes a minor inhibition of the peptide digestion. Functionally, shows nociceptive, edema-inducing and kininogenase activity with release of kallidin from low molecular weight kininogen. The cleavage occurs at Met-Lys bonds. This chain is Natterin-P, found in Thalassophryne nattereri (Copper Joe toadfish).